The sequence spans 177 residues: Small ribosomal subunit protein uS4 (177 aa).

The region spanning 104–168 (RRLQTLVFRK…SPMASESHPE (65 aa)) is the S4 RNA-binding domain. Residues 157–177 (PNSPMASESHPERTDSVKDAE) are disordered. Residues 165–177 (SHPERTDSVKDAE) show a composition bias toward basic and acidic residues.

Belongs to the universal ribosomal protein uS4 family. As to quaternary structure, part of the 30S ribosomal subunit. Contacts protein S5. The interaction surface between S4 and S5 is involved in control of translational fidelity.

Functionally, one of the primary rRNA binding proteins, it binds directly to 16S rRNA where it nucleates assembly of the body of the 30S subunit. Its function is as follows. With S5 and S12 plays an important role in translational accuracy. In Methanococcus aeolicus (strain ATCC BAA-1280 / DSM 17508 / OCM 812 / Nankai-3), this protein is Small ribosomal subunit protein uS4.